The chain runs to 396 residues: Putative 3-phosphoinositide-dependent protein kinase 2 (396 aa).

Positions 1 to 11 (MVRTQTESSTP) are enriched in polar residues. Positions 1-53 (MVRTQTESSTPPGIPGGSRQGPAMDGTAAEPRPGAGSLQHAQPPPQPRKKRPE) are disordered. In terms of domain architecture, Protein kinase spans 55–315 (FKFGKILGEG…YGPLKAHPFF (261 aa)). ATP contacts are provided by residues 65-67 (SFS) and lysine 84. The segment at 86 to 130 (LEKRHIIKENKVPYVTRERDVMSRLDHPFFVKLYFTFQDDEKLYF) is PIF-pocket. ATP contacts are provided by residues 133-135 (SYA) and glutamate 139. The active-site Proton acceptor is the aspartate 178. ATP contacts are provided by glutamate 182 and aspartate 196.

Belongs to the protein kinase superfamily. AGC Ser/Thr protein kinase family. PDPK1 subfamily. In terms of processing, phosphorylated on tyrosine and serine/threonine.

The protein localises to the cytoplasm. Its subcellular location is the membrane. The catalysed reaction is L-seryl-[protein] + ATP = O-phospho-L-seryl-[protein] + ADP + H(+). It catalyses the reaction L-threonyl-[protein] + ATP = O-phospho-L-threonyl-[protein] + ADP + H(+). Its function is as follows. Phosphorylates and activates not only PKB/AKT, but also PKA, PKC-zeta, RPS6KA1 and RPS6KB1. May play a general role in signaling processes and in development. The protein is Putative 3-phosphoinositide-dependent protein kinase 2 of Homo sapiens (Human).